The primary structure comprises 508 residues: CUGBP Elav-like family member 2 (508 aa).

Necessary for RNA-binding, TNNT2 exon 5 and NMDA R1 exon 21 inclusion regions lie at residues 1 to 283 and 357 to 508; these read MRCP…LQNL and LAGM…SKPY. 3 RRM domains span residues 40–123, 132–212, and 423–501; these read IKMF…PADS, RKLF…FADT, and ANLF…LKRS.

It belongs to the CELF/BRUNOL family. As to quaternary structure, interacts with A1CF. Expressed in frontal cortex. Isoform 1 is expressed in brain and lung. Isoform 2 is expressed in heart, brain, placenta, lung, liver, kidney, skeletal muscle and pancreas. Isoform 4 is expressed in heart, lung, skeletal muscle, kidney and pancreas.

The protein localises to the nucleus. Its subcellular location is the cytoplasm. Functionally, RNA-binding protein implicated in the regulation of several post-transcriptional events. Involved in pre-mRNA alternative splicing, mRNA translation and stability. Mediates exon inclusion and/or exclusion in pre-mRNA that are subject to tissue-specific and developmentally regulated alternative splicing. Specifically activates exon 5 inclusion of TNNT2 in embryonic, but not adult, skeletal muscle. Activates TNNT2 exon 5 inclusion by antagonizing the repressive effect of PTB. Acts both as an activator and as a repressor of a pair of coregulated exons: promotes inclusion of the smooth muscle (SM) exon but exclusion of the non-muscle (NM) exon in actinin pre-mRNAs. Promotes inclusion of exonS 21 and exclusion of exon 5 of the NMDA receptor R1 pre-mRNA. Involved in the apoB RNA editing activity. Increases COX2 mRNA stability and inhibits COX2 mRNA translation in epithelial cells after radiation injury. Modulates the cellular apoptosis program by regulating COX2-mediated prostaglandin E2 (PGE2) expression. Binds to (CUG)n triplet repeats in the 3'-UTR of transcripts such as DMPK. Binds to the muscle-specific splicing enhancer (MSE) intronic sites flanking the TNNT2 alternative exon 5. Binds preferentially to UG-rich sequences, in particular UG repeat and UGUU motifs. Binds to apoB mRNA, specifically to AU-rich sequences located immediately upstream of the edited cytidine. Binds AU-rich sequences in the 3'-UTR of COX2 mRNA. Binds to an intronic RNA element responsible for the silencing of exon 21 splicing. Binds to (CUG)n repeats. May be a specific regulator of miRNA biogenesis. Binds to primary microRNA pri-MIR140 and, with CELF1, negatively regulates the processing to mature miRNA. The polypeptide is CUGBP Elav-like family member 2 (CELF2) (Homo sapiens (Human)).